Consider the following 110-residue polypeptide: Multidrug transporter EmrE (110 aa).

Helical transmembrane passes span Tyr-4–Met-21, Val-34–Ala-52, Ile-58–Gly-80, and Ala-87–Leu-104.

This sequence belongs to the drug/metabolite transporter (DMT) superfamily. Small multidrug resistance (SMR) (TC 2.A.7.1) family. As to quaternary structure, homodimer. Forms an antiparallel dimeric structure. Also forms dimers of homodimers.

It is found in the cell inner membrane. Its activity is regulated as follows. Substrate identity influences both the ground-state and transition-state energies for the conformational exchange process, emphasizing the coupling between substrate binding and transport. Its function is as follows. Multidrug efflux protein that confers resistance to a wide range of toxic compounds, including ethidium, methyl viologen, acriflavine, tetraphenylphosphonium (TPP(+)), benzalkonium, propidium, dequalinium and the aminoglycoside antibiotics streptomycin and tobramycin. Can also transport the osmoprotectants betaine and choline. The drug efflux is coupled to an influx of protons. Can couple antiport of a drug to either one or two protons, performing both electrogenic and electroneutral transport of a single substrate. Simultaneously binds and cotransports proton and drug. In Escherichia coli (strain K12), this protein is Multidrug transporter EmrE (emrE).